The primary structure comprises 246 residues: NH(3)-dependent NAD(+) synthetase (246 aa).

Position 29-36 (29-36) interacts with ATP; it reads GLSGGIDS. Asp-35 contacts Mg(2+). Arg-110 is a deamido-NAD(+) binding site. An ATP-binding site is contributed by Thr-130. Residue Glu-135 participates in Mg(2+) binding. Residues Lys-159 and Ser-181 each contribute to the ATP site.

Belongs to the NAD synthetase family. As to quaternary structure, homodimer.

It carries out the reaction deamido-NAD(+) + NH4(+) + ATP = AMP + diphosphate + NAD(+) + H(+). The protein operates within cofactor biosynthesis; NAD(+) biosynthesis; NAD(+) from deamido-NAD(+) (ammonia route): step 1/1. Its function is as follows. Catalyzes the ATP-dependent amidation of deamido-NAD to form NAD. Uses ammonia as a nitrogen source. This is NH(3)-dependent NAD(+) synthetase from Campylobacter jejuni subsp. jejuni serotype O:2 (strain ATCC 700819 / NCTC 11168).